Consider the following 441-residue polypeptide: Ribosomal protein uS12 methylthiotransferase RimO (441 aa).

Positions 8–118 (PKIGFVSLGC…VLEHVHHYVP (111 aa)) constitute an MTTase N-terminal domain. Residues cysteine 17, cysteine 53, cysteine 82, cysteine 150, cysteine 154, and cysteine 157 each coordinate [4Fe-4S] cluster. The 238-residue stretch at 136–373 (LTPRHYAYLK…MQLQQQISAE (238 aa)) folds into the Radical SAM core domain. The TRAM domain occupies 376–441 (QEKVGREILV…DEYDLWGSRV (66 aa)).

The protein belongs to the methylthiotransferase family. RimO subfamily. [4Fe-4S] cluster serves as cofactor.

The protein localises to the cytoplasm. It carries out the reaction L-aspartate(89)-[ribosomal protein uS12]-hydrogen + (sulfur carrier)-SH + AH2 + 2 S-adenosyl-L-methionine = 3-methylsulfanyl-L-aspartate(89)-[ribosomal protein uS12]-hydrogen + (sulfur carrier)-H + 5'-deoxyadenosine + L-methionine + A + S-adenosyl-L-homocysteine + 2 H(+). Catalyzes the methylthiolation of an aspartic acid residue of ribosomal protein uS12. The sequence is that of Ribosomal protein uS12 methylthiotransferase RimO from Shigella boydii serotype 18 (strain CDC 3083-94 / BS512).